A 795-amino-acid chain; its full sequence is Multiple C2 domain and transmembrane region protein 12 (795 aa).

C2 domains are found at residues 24–142, 180–298, and 341–463; these read RNPR…PQWY, VCAS…SAPA, and YSSD…TCSY. Positions 57, 109, and 113 each coordinate Ca(2+). Helical transmembrane passes span 590 to 610, 612 to 632, 730 to 750, and 752 to 772; these read CTPK…EYYI, WLVT…VILL, FVLI…CLGW, and LHVR…LPWF.

The protein belongs to the MCTP family. Ca(2+) is required as a cofactor. In terms of tissue distribution, expressed in root vascular tissues and meristems. Observed in flowers.

The protein resides in the endoplasmic reticulum membrane. Functionally, may function as a signaling molecule by regulating the trafficking of other regulators. This is Multiple C2 domain and transmembrane region protein 12 from Arabidopsis thaliana (Mouse-ear cress).